The chain runs to 115 residues: Large ribosomal subunit protein bL20 (115 aa).

It belongs to the bacterial ribosomal protein bL20 family.

Its function is as follows. Binds directly to 23S ribosomal RNA and is necessary for the in vitro assembly process of the 50S ribosomal subunit. It is not involved in the protein synthesizing functions of that subunit. This chain is Large ribosomal subunit protein bL20 (rplT), found in Borreliella burgdorferi (strain ATCC 35210 / DSM 4680 / CIP 102532 / B31) (Borrelia burgdorferi).